Consider the following 274-residue polypeptide: Probable starch degradation products transport system permease protein AmyC (274 aa).

6 helical membrane passes run 11–31 (LTFL…IILV), 73–93 (LIIT…TAYA), 103–123 (VIIY…VMIP), 139–159 (LVFM…YGAL), 184–204 (IILP…IMWI), and 238–258 (WNLG…FYFL). Residues 69 to 259 (FSNTLIITVF…LPVVIFYFLA (191 aa)) form the ABC transmembrane type-1 domain.

Belongs to the binding-protein-dependent transport system permease family. MalFG subfamily.

Its subcellular location is the cell membrane. Functionally, probably part of a binding-protein-dependent transport system starch degradation products. Probably responsible for the translocation of the substrate across the membrane. The polypeptide is Probable starch degradation products transport system permease protein AmyC (amyC) (Thermoanaerobacterium thermosulfurigenes (Clostridium thermosulfurogenes)).